Here is a 434-residue protein sequence, read N- to C-terminus: Enolase (434 aa).

Q168 contacts (2R)-2-phosphoglycerate. The Proton donor role is filled by E210. Mg(2+) contacts are provided by D247, E292, and D319. The (2R)-2-phosphoglycerate site is built by K344, R373, S374, and K395. The active-site Proton acceptor is the K344.

It belongs to the enolase family. It depends on Mg(2+) as a cofactor.

The protein resides in the cytoplasm. The protein localises to the secreted. It is found in the cell surface. It carries out the reaction (2R)-2-phosphoglycerate = phosphoenolpyruvate + H2O. It participates in carbohydrate degradation; glycolysis; pyruvate from D-glyceraldehyde 3-phosphate: step 4/5. In terms of biological role, catalyzes the reversible conversion of 2-phosphoglycerate (2-PG) into phosphoenolpyruvate (PEP). It is essential for the degradation of carbohydrates via glycolysis. In Endomicrobium trichonymphae, this protein is Enolase.